The following is a 641-amino-acid chain: Protein BCAP (641 aa).

4 coiled-coil regions span residues His-83 to Asp-144, Glu-191 to Glu-270, Gln-299 to Gln-375, and Phe-487 to Ala-599.

This sequence belongs to the ODF2 family.

The protein resides in the cytoplasm. It localises to the cytoskeleton. The protein localises to the microtubule organizing center. It is found in the centrosome. Its subcellular location is the centriole. The protein resides in the centriolar satellite. It localises to the cilium basal body. In terms of biological role, acts as a suppressor of ciliogenesis, specifically, the initiation of ciliogenesis. This is Protein BCAP (odf2l) from Xenopus laevis (African clawed frog).